Reading from the N-terminus, the 116-residue chain is Non-specific lipid-transfer protein 8 (116 aa).

A signal peptide spans 1–24 (MNVLKCLAIISVLGIFFIPRYSES). Cystine bridges form between Cys-28/Cys-76, Cys-38/Cys-53, Cys-54/Cys-98, and Cys-74/Cys-112.

Belongs to the plant LTP family.

In terms of biological role, plant non-specific lipid-transfer proteins transfer phospholipids as well as galactolipids across membranes. May play a role in wax or cutin deposition in the cell walls of expanding epidermal cells and certain secretory tissues. In Arabidopsis thaliana (Mouse-ear cress), this protein is Non-specific lipid-transfer protein 8 (LTP8).